The primary structure comprises 113 residues: Large ribosomal subunit protein uL18 (113 aa).

The protein belongs to the universal ribosomal protein uL18 family. Part of the 50S ribosomal subunit; part of the 5S rRNA/L5/L18/L25 subcomplex. Contacts the 5S and 23S rRNAs.

This is one of the proteins that bind and probably mediate the attachment of the 5S RNA into the large ribosomal subunit, where it forms part of the central protuberance. The chain is Large ribosomal subunit protein uL18 from Phocaeicola vulgatus (strain ATCC 8482 / DSM 1447 / JCM 5826 / CCUG 4940 / NBRC 14291 / NCTC 11154) (Bacteroides vulgatus).